An 836-amino-acid polypeptide reads, in one-letter code: RNA-binding protein 12B-A (836 aa).

In terms of domain architecture, RRM 1 spans 154–229; that stretch reads PYLFLRGLPY…RFIEVMQGSE (76 aa). The tract at residues 237-277 is disordered; that stretch reads GTATEGGDTPRMRSEEHSPSRRINGRHFRKRSHSKSPRARS. Over residues 244 to 255 the composition is skewed to basic and acidic residues; sequence DTPRMRSEEHSP. The span at 259 to 277 shows a compositional bias: basic residues; sequence INGRHFRKRSHSKSPRARS. 2 RRM domains span residues 283–359 and 401–478; these read FYVH…PVSR and LCIY…LISE. Disordered regions lie at residues 539-572 and 620-644; these read GHFKHPQGYFRQSDRRSPEDFRHSPEDYRHPWEE and SQEHFRRSYQEHIRQPPEEHFRRSR. Residues 550 to 572 show a composition bias toward basic and acidic residues; it reads QSDRRSPEDFRHSPEDYRHPWEE. A Phosphoserine modification is found at S703. K758 is modified (N6-acetyllysine). Positions 760–836 constitute an RRM 4 domain; the sequence is IPVKISNLPF…GPRKVKLSLL (77 aa).

This is RNA-binding protein 12B-A (Rbm12b1) from Mus musculus (Mouse).